The following is a 332-amino-acid chain: NH(3)-dependent NAD(+) synthetase (332 aa).

Glycine 48 to serine 55 provides a ligand contact to ATP. A Mg(2+)-binding site is contributed by aspartate 54. Deamido-NAD(+) is bound at residue arginine 184. Threonine 204 provides a ligand contact to ATP. Mg(2+) is bound at residue glutamate 209. Deamido-NAD(+) contacts are provided by lysine 217 and aspartate 224. Residues lysine 233 and threonine 255 each coordinate ATP.

The protein belongs to the NAD synthetase family. In terms of assembly, homodimer.

It catalyses the reaction deamido-NAD(+) + NH4(+) + ATP = AMP + diphosphate + NAD(+) + H(+). Its pathway is cofactor biosynthesis; NAD(+) biosynthesis; NAD(+) from deamido-NAD(+) (ammonia route): step 1/1. In terms of biological role, catalyzes the ATP-dependent amidation of deamido-NAD to form NAD. Uses ammonia as a nitrogen source. The protein is NH(3)-dependent NAD(+) synthetase of Rhizobium rhizogenes (strain K84 / ATCC BAA-868) (Agrobacterium radiobacter).